A 338-amino-acid chain; its full sequence is NAC domain-containing protein 46 (338 aa).

Residues 20 to 171 (LPPGFRFHPT…EWVVCRVFHK (152 aa)) form the NAC domain. A DNA-binding region spans residues 118–177 (VGMKKTLVFYTGRAPKGEKTNWVMHEYRLDGKYSYHNLPKTARDEWVVCRVFHKNAPSTT).

As to quaternary structure, interacts with RCD1.

The protein resides in the nucleus. Functionally, transcriptional activator that acts as a positive regulator of leaf senescence. Activates NYC1, SGR1, SGR2 and PAO, which are genes involved in chlorophyll catabolic processes. Activates senescence-associated genes, such as RNS1, SAG12 and SAG13. This chain is NAC domain-containing protein 46, found in Arabidopsis thaliana (Mouse-ear cress).